The following is a 239-amino-acid chain: Ubiquinone biosynthesis O-methyltransferase (239 aa).

Positions 42, 62, 83, and 127 each coordinate S-adenosyl-L-methionine.

It belongs to the methyltransferase superfamily. UbiG/COQ3 family.

It carries out the reaction a 3-demethylubiquinol + S-adenosyl-L-methionine = a ubiquinol + S-adenosyl-L-homocysteine + H(+). It catalyses the reaction a 3-(all-trans-polyprenyl)benzene-1,2-diol + S-adenosyl-L-methionine = a 2-methoxy-6-(all-trans-polyprenyl)phenol + S-adenosyl-L-homocysteine + H(+). Its pathway is cofactor biosynthesis; ubiquinone biosynthesis. O-methyltransferase that catalyzes the 2 O-methylation steps in the ubiquinone biosynthetic pathway. This is Ubiquinone biosynthesis O-methyltransferase from Pectobacterium carotovorum subsp. carotovorum (strain PC1).